The following is a 298-amino-acid chain: Acetate permease A (298 aa).

The disordered stretch occupies residues 1–43 (MSAEQNHGLEKDVGGPAAPAAAAPNAPAAAPGAPPAGMSAEEH). Residues 14–37 (GGPAAPAAAAPNAPAAAPGAPPAG) are compositionally biased toward low complexity. 6 helical membrane passes run 86–106 (APLG…INMG), 115–135 (IVIA…GMWE), 146–166 (ALSS…PGGF), 185–205 (SFGL…FCTL), 210–230 (AFFL…VGYI), and 245–265 (AGGF…LAGI).

The protein belongs to the acetate uptake transporter (AceTr) (TC 2.A.96) family.

It localises to the cell membrane. The protein localises to the vacuole membrane. In terms of biological role, high affinity monocarboxylate transporter (MCT) involved in acetate uptake. Unlike other activities involved in acetate utilization, acpA is dispensable for growth on the acetate precursor ethanol. In Emericella nidulans (strain FGSC A4 / ATCC 38163 / CBS 112.46 / NRRL 194 / M139) (Aspergillus nidulans), this protein is Acetate permease A.